The primary structure comprises 402 residues: MRMSPVFACLALGLALIFGEGSASYQPQSAAASLATDFGVKVFQQVVRASKDRNVVFSPYGVASVLAMLQLTTGGETRQQIQEAMQFKIEEKGMAPAFHRLYKELMGPWNKDEISTADAIFVQRDLELVHGFMPNFFRLFRTTVKQVDFSEVERARFIVNDWVKRHTKGMISDLLGEGAVDQLTRLVLVNALYFNGQWKMPFPESNTHHRLFHKSDGSTISVPMMAQTNKFNYTEFTTPDGRYYDILELPYHGNTLSMLIAAPYEKEVPLSALTSILDAELISQWKGNMTRLTRLLVLPKFSLETEIDLRRPLENLGMTDMFRPSQADFSSFSDQEFLYVSQALQKVKIEVNESGTLASSSTALVVSARMAPEEIIMDRPFLFVVRHNPTGTVLFMGQVMEP.

The N-terminal stretch at 1–23 is a signal peptide; that stretch reads MRMSPVFACLALGLALIFGEGSA. N-linked (GlcNAc...) asparagine glycosylation is found at asparagine 232, asparagine 288, and asparagine 352.

The protein belongs to the serpin family. Forms a heterodimer with TMPRSS7. Interacts with VTN. Binds LRP1B; binding is followed by internalization and degradation. Interacts with PPP1CB. In complex with PLAU/uPA, interacts with PLAUR/uPAR. Interacts with SORL1 and LRP1, either alone or in complex with PLAU; these interactions are abolished in the presence of LRPAP1/RAP. The ternary complex composed of PLAUR-PLAU-PAI1 also interacts with SORL1. Interacts with PLAT/tPA. Also interacts with SORL1, when complexed to PLAT/tPA. In terms of tissue distribution, vascular endothelial cells may be the primary site of synthesis of plasma PAI1.

The protein resides in the secreted. Functionally, serine protease inhibitor. Inhibits TMPRSS7. Is a primary inhibitor of tissue-type plasminogen activator (PLAT) and urokinase-type plasminogen activator (PLAU). As PLAT inhibitor, it is required for fibrinolysis down-regulation and is responsible for the controlled degradation of blood clots. As PLAU inhibitor, it is involved in the regulation of cell adhesion and spreading. Acts as a regulator of cell migration, independently of its role as protease inhibitor. It is required for stimulation of keratinocyte migration during cutaneous injury repair. It is involved in cellular and replicative senescence. Plays a role in alveolar type 2 cells senescence in the lung. Is involved in the regulation of cementogenic differentiation of periodontal ligament stem cells, and regulates odontoblast differentiation and dentin formation during odontogenesis. The sequence is that of Plasminogen activator inhibitor 1 (SERPINE1) from Bos taurus (Bovine).